The chain runs to 500 residues: MSDQQLDPQALQQEENTLIALRKEKLAAGRAKGQAFPNDFRRDSYCNDLQKQYVDKTKEELAEAAIPVKVAGRIMLNRGSFMVIQDMTGRIQVYVNRKTLAEETLAEVKTWDLGDIIAAEGTLARSGKGDLYVEMTTVRLLTKSLRPLPDKHHGLTDTEQRYRQRYVDLIVNEDVRETFRVRSQVIAHIRSFLMKRDFLEVETPMLQTIPGGAAAKPFETHHNALDMEMFLRIAPELYLKRLVVGGFEKVFEINRNFRNEGVSTRHNPEFTMLEFYQAYADYEDNMDLTEELFRELAQLVLGTTDVPYGDKVFHFGEPFVRLSVFDSILKYNPDLTAADLQDVDKARAIAKKAGAKVLGFEGLGKLQVMIFEELVEHKLKQPHFITQYPFEVSPLARRNDENPSVTDRFELFIGGREIANAYSELNDAEDQAERFQAQVADKDAGDDEAMHYDADFVRALEYGMPPTAGEGIGIDRLVMLLTDSPSIRDVILFPHMRPQA.

Residues Glu410 and Glu417 each contribute to the Mg(2+) site.

Belongs to the class-II aminoacyl-tRNA synthetase family. As to quaternary structure, homodimer. It depends on Mg(2+) as a cofactor.

The protein localises to the cytoplasm. It catalyses the reaction tRNA(Lys) + L-lysine + ATP = L-lysyl-tRNA(Lys) + AMP + diphosphate. The sequence is that of Lysine--tRNA ligase from Pseudomonas savastanoi pv. phaseolicola (strain 1448A / Race 6) (Pseudomonas syringae pv. phaseolicola (strain 1448A / Race 6)).